We begin with the raw amino-acid sequence, 581 residues long: NADP-dependent malic enzyme 1 (581 aa).

Tyr129 acts as the Proton donor in catalysis. Arg182 contributes to the NADP(+) binding site. The Proton acceptor role is filled by Lys200. 3 residues coordinate a divalent metal cation: Glu272, Asp273, and Asp296. Residues Asp296, 325-341 (LFLG…ELIA), and Asn437 each bind NADP(+).

Belongs to the malic enzymes family. In terms of assembly, homohexamers and homooctamers. Requires Mg(2+) as cofactor. The cofactor is Mn(2+). In terms of tissue distribution, specifically expressed in roots (only in steles of secondary roots).

The protein resides in the cytoplasm. It catalyses the reaction (S)-malate + NADP(+) = pyruvate + CO2 + NADPH. The catalysed reaction is oxaloacetate + H(+) = pyruvate + CO2. This chain is NADP-dependent malic enzyme 1 (NADP-ME1), found in Arabidopsis thaliana (Mouse-ear cress).